A 476-amino-acid chain; its full sequence is Sulfate adenylyltransferase subunit 1 (476 aa).

The 216-residue stretch at 24 to 239 (KSLLRFLTCG…LLETVDVDYE (216 aa)) folds into the tr-type G domain. The interval 33–40 (GSVDDGKS) is G1. GTP is bound at residue 33–40 (GSVDDGKS). The interval 91–95 (GITID) is G2. Residues 112–115 (DTPG) are G3. Residues 112-116 (DTPGH) and 167-170 (NKMD) each bind GTP. The tract at residues 167-170 (NKMD) is G4. A G5 region spans residues 205–207 (SAL).

The protein belongs to the TRAFAC class translation factor GTPase superfamily. Classic translation factor GTPase family. CysN/NodQ subfamily. In terms of assembly, heterodimer composed of CysD, the smaller subunit, and CysN.

It catalyses the reaction sulfate + ATP + H(+) = adenosine 5'-phosphosulfate + diphosphate. It functions in the pathway sulfur metabolism; hydrogen sulfide biosynthesis; sulfite from sulfate: step 1/3. With CysD forms the ATP sulfurylase (ATPS) that catalyzes the adenylation of sulfate producing adenosine 5'-phosphosulfate (APS) and diphosphate, the first enzymatic step in sulfur assimilation pathway. APS synthesis involves the formation of a high-energy phosphoric-sulfuric acid anhydride bond driven by GTP hydrolysis by CysN coupled to ATP hydrolysis by CysD. The protein is Sulfate adenylyltransferase subunit 1 of Vibrio parahaemolyticus serotype O3:K6 (strain RIMD 2210633).